The chain runs to 564 residues: Dihydroxy-acid dehydratase (564 aa).

Cys53 contacts [2Fe-2S] cluster. Residue Asp85 coordinates Mg(2+). Cys126 serves as a coordination point for [2Fe-2S] cluster. Mg(2+) is bound by residues Asp127 and Lys128. An N6-carboxylysine modification is found at Lys128. [2Fe-2S] cluster is bound at residue Cys203. Glu454 is a binding site for Mg(2+). Residue Ser480 is the Proton acceptor of the active site.

This sequence belongs to the IlvD/Edd family. Homodimer. The cofactor is [2Fe-2S] cluster. Mg(2+) is required as a cofactor.

It catalyses the reaction (2R)-2,3-dihydroxy-3-methylbutanoate = 3-methyl-2-oxobutanoate + H2O. The catalysed reaction is (2R,3R)-2,3-dihydroxy-3-methylpentanoate = (S)-3-methyl-2-oxopentanoate + H2O. It functions in the pathway amino-acid biosynthesis; L-isoleucine biosynthesis; L-isoleucine from 2-oxobutanoate: step 3/4. It participates in amino-acid biosynthesis; L-valine biosynthesis; L-valine from pyruvate: step 3/4. In terms of biological role, functions in the biosynthesis of branched-chain amino acids. Catalyzes the dehydration of (2R,3R)-2,3-dihydroxy-3-methylpentanoate (2,3-dihydroxy-3-methylvalerate) into 2-oxo-3-methylpentanoate (2-oxo-3-methylvalerate) and of (2R)-2,3-dihydroxy-3-methylbutanoate (2,3-dihydroxyisovalerate) into 2-oxo-3-methylbutanoate (2-oxoisovalerate), the penultimate precursor to L-isoleucine and L-valine, respectively. This is Dihydroxy-acid dehydratase from Mycobacterium ulcerans (strain Agy99).